Here is a 122-residue protein sequence, read N- to C-terminus: MARIAGVNIPTNKRVVIALQYIHGIGQKNAAEIIEKVKIPADRRVSQLTDQEVLQIREVIDRDYLVEGDLRREVGINIKRLMDLGCYRGLRHRRGLPVRGQRTHTNARTRKGPAKSIAGKKK.

Positions 95–122 are disordered; the sequence is GLPVRGQRTHTNARTRKGPAKSIAGKKK.

Belongs to the universal ribosomal protein uS13 family. Part of the 30S ribosomal subunit. Forms a loose heterodimer with protein S19. Forms two bridges to the 50S subunit in the 70S ribosome.

Located at the top of the head of the 30S subunit, it contacts several helices of the 16S rRNA. In the 70S ribosome it contacts the 23S rRNA (bridge B1a) and protein L5 of the 50S subunit (bridge B1b), connecting the 2 subunits; these bridges are implicated in subunit movement. Contacts the tRNAs in the A and P-sites. In Nitrobacter winogradskyi (strain ATCC 25391 / DSM 10237 / CIP 104748 / NCIMB 11846 / Nb-255), this protein is Small ribosomal subunit protein uS13.